The primary structure comprises 247 residues: Adenosylcobinamide-GDP ribazoletransferase (247 aa).

Helical transmembrane passes span 34 to 54 (IVMF…IFIL), 59 to 79 (CGIP…TGGF), 113 to 133 (GGLA…ELAL), 138 to 158 (MLAA…LLMY), and 194 to 214 (VLLL…AIFI).

The protein belongs to the CobS family. Requires Mg(2+) as cofactor.

The protein localises to the cell inner membrane. It carries out the reaction alpha-ribazole + adenosylcob(III)inamide-GDP = adenosylcob(III)alamin + GMP + H(+). It catalyses the reaction alpha-ribazole 5'-phosphate + adenosylcob(III)inamide-GDP = adenosylcob(III)alamin 5'-phosphate + GMP + H(+). Its pathway is cofactor biosynthesis; adenosylcobalamin biosynthesis; adenosylcobalamin from cob(II)yrinate a,c-diamide: step 7/7. Functionally, joins adenosylcobinamide-GDP and alpha-ribazole to generate adenosylcobalamin (Ado-cobalamin). Also synthesizes adenosylcobalamin 5'-phosphate from adenosylcobinamide-GDP and alpha-ribazole 5'-phosphate. The protein is Adenosylcobinamide-GDP ribazoletransferase of Salmonella typhi.